We begin with the raw amino-acid sequence, 485 residues long: Glutamate--tRNA ligase (485 aa).

Positions 12 to 22 match the 'HIGH' region motif; that stretch reads PSPTGEPHVGT. A 'KMSKS' region motif is present at residues 253–257; the sequence is KLSKR. Lys-256 serves as a coordination point for ATP.

This sequence belongs to the class-I aminoacyl-tRNA synthetase family. Glutamate--tRNA ligase type 1 subfamily. In terms of assembly, monomer.

The protein resides in the cytoplasm. The catalysed reaction is tRNA(Glu) + L-glutamate + ATP = L-glutamyl-tRNA(Glu) + AMP + diphosphate. Catalyzes the attachment of glutamate to tRNA(Glu) in a two-step reaction: glutamate is first activated by ATP to form Glu-AMP and then transferred to the acceptor end of tRNA(Glu). The sequence is that of Glutamate--tRNA ligase from Rhizobium meliloti (strain 1021) (Ensifer meliloti).